Reading from the N-terminus, the 364-residue chain is Methylthioribose-1-phosphate isomerase (364 aa).

Residues 53-55 (RGA), R90, and Q203 each bind substrate. D244 serves as the catalytic Proton donor. 254 to 255 (NK) is a substrate binding site.

It belongs to the eIF-2B alpha/beta/delta subunits family. MtnA subfamily.

It carries out the reaction 5-(methylsulfanyl)-alpha-D-ribose 1-phosphate = 5-(methylsulfanyl)-D-ribulose 1-phosphate. It participates in amino-acid biosynthesis; L-methionine biosynthesis via salvage pathway; L-methionine from S-methyl-5-thio-alpha-D-ribose 1-phosphate: step 1/6. Functionally, catalyzes the interconversion of methylthioribose-1-phosphate (MTR-1-P) into methylthioribulose-1-phosphate (MTRu-1-P). The sequence is that of Methylthioribose-1-phosphate isomerase from Brucella anthropi (strain ATCC 49188 / DSM 6882 / CCUG 24695 / JCM 21032 / LMG 3331 / NBRC 15819 / NCTC 12168 / Alc 37) (Ochrobactrum anthropi).